We begin with the raw amino-acid sequence, 213 residues long: Cytochrome b-c1 complex subunit Rieske, mitochondrial (213 aa).

The N-terminal 29 residues, 1 to 29 (MSSLAFRTLRNGLGLKSSVRALSTTTTTL), are a transit peptide targeting the mitochondrion. Over 30-47 (SNYQQPDYSSYLNNKSGQ) the chain is Mitochondrial matrix. Residues 48–77 (GSRNFTYFMVGSMGLLSAAGAKSTVEAFLS) traverse the membrane as a helical segment. Residues 78–213 (SFAASADVLA…FTDDETLLVG (136 aa)) are Mitochondrial intermembrane-facing. One can recognise a Rieske domain in the interval 116–211 (RHRTADEIEE…YDFTDDETLL (96 aa)). [2Fe-2S] cluster-binding residues include Cys-156, His-158, Cys-175, and His-178. An intrachain disulfide couples Cys-161 to Cys-177.

The protein belongs to the Rieske iron-sulfur protein family. In terms of assembly, component of the ubiquinol-cytochrome c oxidoreductase (cytochrome b-c1 complex, complex III, CIII), a multisubunit enzyme composed of 10 subunits. The complex is composed of 3 respiratory subunits cytochrome b (COB), cytochrome c1 (CYT1) and Rieske protein (RIP1), 2 core protein subunits COR1 and QCR2, and 5 low-molecular weight protein subunits QCR6, QCR7, QCR8, QCR9 and QCR10. The complex exists as an obligatory dimer and forms supercomplexes (SCs) in the inner mitochondrial membrane with a monomer or a dimer of cytochrome c oxidase (complex IV, CIV), resulting in 2 different assemblies (supercomplexes III(2)IV and III(2)IV(2)). [2Fe-2S] cluster is required as a cofactor.

Its subcellular location is the mitochondrion inner membrane. It carries out the reaction a quinol + 2 Fe(III)-[cytochrome c](out) = a quinone + 2 Fe(II)-[cytochrome c](out) + 2 H(+)(out). Component of the ubiquinol-cytochrome c oxidoreductase, a multisubunit transmembrane complex that is part of the mitochondrial electron transport chain which drives oxidative phosphorylation. The complex plays an important role in the uptake of multiple carbon sources present in different host niches. The sequence is that of Cytochrome b-c1 complex subunit Rieske, mitochondrial from Candida albicans (strain SC5314 / ATCC MYA-2876) (Yeast).